The sequence spans 228 residues: 7-cyano-7-deazaguanine synthase (228 aa).

10-20 (FSGGQDSTTLA) lines the ATP pocket. Residues Cys-190, Cys-205, Cys-208, and Cys-211 each coordinate Zn(2+).

It belongs to the QueC family. The cofactor is Zn(2+).

The enzyme catalyses 7-carboxy-7-deazaguanine + NH4(+) + ATP = 7-cyano-7-deazaguanine + ADP + phosphate + H2O + H(+). The protein operates within purine metabolism; 7-cyano-7-deazaguanine biosynthesis. In terms of biological role, catalyzes the ATP-dependent conversion of 7-carboxy-7-deazaguanine (CDG) to 7-cyano-7-deazaguanine (preQ(0)). In Helicobacter pylori (strain HPAG1), this protein is 7-cyano-7-deazaguanine synthase.